A 307-amino-acid polypeptide reads, in one-letter code: G-protein coupled receptor 35 (307 aa).

The Extracellular portion of the chain corresponds to 1–18; sequence MNSTTCNSTLTWPASVNN. Asparagine 2 and asparagine 7 each carry an N-linked (GlcNAc...) asparagine glycan. The helical transmembrane segment at 19–39 threads the bilayer; that stretch reads FFIIYSALLLVLGLLLNSVAL. At 40–53 the chain is on the cytoplasmic side; the sequence is WVFCYRMHQWTETR. Residues 54–74 form a helical membrane-spanning segment; that stretch reads IYMTNLAVADLCLLCSLPFVL. The Extracellular portion of the chain corresponds to 75-88; sequence YSLKYSSSDTPVCQ. Residues cysteine 87 and cysteine 160 are joined by a disulfide bond. Residues 89–110 form a helical membrane-spanning segment; the sequence is LSQGIYLANRYMSISLVTAIAV. Residues 111–129 lie on the Cytoplasmic side of the membrane; that stretch reads DRYVAVRHPLRARELRSPR. A helical transmembrane segment spans residues 130–150; sequence QAAAVCVALWVIVVTSLVVRW. Topologically, residues 151-176 are extracellular; that stretch reads RLGMQEGGFCFSSQTRRNFSTTAFSL. A helical transmembrane segment spans residues 177–197; sequence LGFYLPLAIVVFCSLQVVTVL. Topologically, residues 198-217 are cytoplasmic; it reads SRRPAADVGQAEATQKATHM. The chain crosses the membrane as a helical span at residues 218–238; the sequence is VWANLAVFVICFLPLHVVLTV. Residues 239–257 lie on the Extracellular side of the membrane; sequence QVSLNLNTCAARDTFSRAL. Residues 258–278 traverse the membrane as a helical segment; sequence SITGKLSDTNCCLDAICYYYM. Residues 279-307 are Cytoplasmic-facing; sequence AREFQEASKPATSSNTPHKSQDSQILSLT. 4 positions are modified to phosphoserine: serine 286, serine 292, serine 298, and serine 301. Residues 288 to 307 form a disordered region; sequence PATSSNTPHKSQDSQILSLT.

It belongs to the G-protein coupled receptor 1 family. Multiply phosphorylated in clusters of serines and threonines in the C-terminal tail. Phosphorylation of Ser-298 and Ser-301 is mediated by GRK5 and/or GRK6. As to expression, predominantly expressed in immune and gastrointestinal tissues. Strongly GPR35 expressed in colonic macrophages.

The protein resides in the cell membrane. Functionally, G-protein coupled receptor that binds to several ligands including the tryptophan metabolite kynurenic acid (KYNA), lysophosphatidic acid (LPA) or 5-hydroxyindoleacetic acid (5-HIAA) with high affinity, leading to rapid and transient activation of numerous intracellular signaling pathways. Plays a role in neutrophil recruitment to sites of inflammation and bacterial clearance through the major serotonin metabolite 5-HIAA that acts as a physiological ligand. Stimulates lipid metabolism, thermogenic, and anti-inflammatory gene expression in adipose tissue once activated by kynurenic acid. In macrophages, activation by lysophosphatidic acid promotes GPR35-induced signaling with a distinct transcriptional profile characterized by TNF production associated with ERK and NF-kappa-B activation. In turn, induces chemotaxis of macrophages. This Mus musculus (Mouse) protein is G-protein coupled receptor 35 (Gpr35).